Reading from the N-terminus, the 238-residue chain is 5-amino-6-(5-phospho-D-ribitylamino)uracil phosphatase YigB (238 aa).

Catalysis depends on Asp-16, which acts as the Nucleophile. Residues Asp-16, Asp-18, and Asp-188 each coordinate Mg(2+). 16-18 (DLD) lines the substrate pocket.

The protein belongs to the HAD-like hydrolase superfamily. Requires Mg(2+) as cofactor. The cofactor is Mn(2+). It depends on Co(2+) as a cofactor. Zn(2+) serves as cofactor.

The enzyme catalyses 5-amino-6-(5-phospho-D-ribitylamino)uracil + H2O = 5-amino-6-(D-ribitylamino)uracil + phosphate. Its pathway is cofactor biosynthesis; riboflavin biosynthesis; 5-amino-6-(D-ribitylamino)uracil from GTP: step 4/4. In terms of biological role, catalyzes the dephosphorylation of 5-amino-6-(5-phospho-D-ribitylamino)uracil, and thus could be involved in the riboflavin biosynthesis pathway. Is also able to dephosphorylate flavin mononucleotide (FMN) and other phosphoric acid esters. YigB is important for the formation of dormant persister cells. The polypeptide is 5-amino-6-(5-phospho-D-ribitylamino)uracil phosphatase YigB (yigB) (Escherichia coli (strain K12)).